A 563-amino-acid polypeptide reads, in one-letter code: PHD finger protein EHD3 (563 aa).

Residues 1-46 form a disordered region; that stretch reads MGSQNRPPPPRKRQPPPPEDHLVTYKRRRSKETQPLPLMANGANSK. 3 PHD-type zinc fingers span residues 296-348, 420-472, and 474-524; these read LCPC…CSFK, SNLC…CWYC, and SCLC…CKIR.

Interacts with TRX1. Expressed in shoot apical meristem and leaves.

The protein localises to the nucleus. Its function is as follows. Probable transcription factor involved in the regulation of floral induction under long day (LD) conditions. Promotes photoperiodic flowering by repressing GHD7, a major floral repressor. Seems to function independently of HD1. This is PHD finger protein EHD3 from Oryza sativa subsp. japonica (Rice).